A 361-amino-acid polypeptide reads, in one-letter code: Alanine racemase 2 (361 aa).

K30 (proton acceptor; specific for D-alanine) is an active-site residue. Residue K30 is modified to N6-(pyridoxal phosphate)lysine. R122 is a binding site for substrate. Catalysis depends on Y256, which acts as the Proton acceptor; specific for L-alanine. A substrate-binding site is contributed by M303.

The protein belongs to the alanine racemase family. The cofactor is pyridoxal 5'-phosphate.

It catalyses the reaction L-alanine = D-alanine. It functions in the pathway amino-acid biosynthesis; D-alanine biosynthesis; D-alanine from L-alanine: step 1/1. Functionally, catalyzes the interconversion of L-alanine and D-alanine. May also act on other amino acids. This Staphylococcus aureus (strain COL) protein is Alanine racemase 2 (alr2).